The chain runs to 366 residues: tRNA/tmRNA (uracil-C(5))-methyltransferase (366 aa).

Residues Gln-190, Tyr-218, Asn-223, Glu-239, and Asp-299 each coordinate S-adenosyl-L-methionine. Cys-324 serves as the catalytic Nucleophile. The Proton acceptor role is filled by Glu-358.

It belongs to the class I-like SAM-binding methyltransferase superfamily. RNA M5U methyltransferase family. TrmA subfamily.

The catalysed reaction is uridine(54) in tRNA + S-adenosyl-L-methionine = 5-methyluridine(54) in tRNA + S-adenosyl-L-homocysteine + H(+). It catalyses the reaction uridine(341) in tmRNA + S-adenosyl-L-methionine = 5-methyluridine(341) in tmRNA + S-adenosyl-L-homocysteine + H(+). In terms of biological role, dual-specificity methyltransferase that catalyzes the formation of 5-methyluridine at position 54 (m5U54) in all tRNAs, and that of position 341 (m5U341) in tmRNA (transfer-mRNA). The polypeptide is tRNA/tmRNA (uracil-C(5))-methyltransferase (Salmonella typhi).